The primary structure comprises 285 residues: Bifunctional protein FolD (285 aa).

NADP(+) is bound by residues Gly166–Ser168 and Ile232.

This sequence belongs to the tetrahydrofolate dehydrogenase/cyclohydrolase family. In terms of assembly, homodimer.

It carries out the reaction (6R)-5,10-methylene-5,6,7,8-tetrahydrofolate + NADP(+) = (6R)-5,10-methenyltetrahydrofolate + NADPH. It catalyses the reaction (6R)-5,10-methenyltetrahydrofolate + H2O = (6R)-10-formyltetrahydrofolate + H(+). It functions in the pathway one-carbon metabolism; tetrahydrofolate interconversion. Functionally, catalyzes the oxidation of 5,10-methylenetetrahydrofolate to 5,10-methenyltetrahydrofolate and then the hydrolysis of 5,10-methenyltetrahydrofolate to 10-formyltetrahydrofolate. The protein is Bifunctional protein FolD of Photobacterium profundum (strain SS9).